We begin with the raw amino-acid sequence, 438 residues long: Aspartate--tRNA(Asp/Asn) ligase (438 aa).

Residue Glu-176 participates in L-aspartate binding. Residues 198-201 (QLYK) form an aspartate region. Position 220 (Arg-220) interacts with L-aspartate. ATP-binding positions include 220-222 (RAE), 228-230 (RHL), and Glu-361. Mg(2+) is bound by residues Glu-361 and Ser-364. The L-aspartate site is built by Ser-364 and Arg-368. 409 to 412 (GIER) contributes to the ATP binding site.

Belongs to the class-II aminoacyl-tRNA synthetase family. Type 2 subfamily. In terms of assembly, homodimer. Mg(2+) is required as a cofactor.

The protein localises to the cytoplasm. The catalysed reaction is tRNA(Asx) + L-aspartate + ATP = L-aspartyl-tRNA(Asx) + AMP + diphosphate. In terms of biological role, aspartyl-tRNA synthetase with relaxed tRNA specificity since it is able to aspartylate not only its cognate tRNA(Asp) but also tRNA(Asn). Reaction proceeds in two steps: L-aspartate is first activated by ATP to form Asp-AMP and then transferred to the acceptor end of tRNA(Asp/Asn). The protein is Aspartate--tRNA(Asp/Asn) ligase of Methanococcus aeolicus (strain ATCC BAA-1280 / DSM 17508 / OCM 812 / Nankai-3).